A 354-amino-acid polypeptide reads, in one-letter code: Mycothiol acetyltransferase (354 aa).

Polar residues predominate over residues 1 to 18 (MMVDNQTPDSSTLSTAST). The segment at 1-21 (MMVDNQTPDSSTLSTASTPVY) is disordered. N-acetyltransferase domains are found at residues 21 to 176 (YAEP…QTRE) and 191 to 354 (LRMR…EPAA). 1D-myo-inositol 2-(L-cysteinylamino)-2-deoxy-alpha-D-glucopyranoside is bound at residue glutamate 52. Residue 101-103 (AAV) coordinates acetyl-CoA. 3 residues coordinate 1D-myo-inositol 2-(L-cysteinylamino)-2-deoxy-alpha-D-glucopyranoside: glutamate 217, lysine 259, and glutamate 274. Acetyl-CoA-binding positions include 278-280 (VGV) and 285-291 (QGGGLGR). Tyrosine 318 contributes to the 1D-myo-inositol 2-(L-cysteinylamino)-2-deoxy-alpha-D-glucopyranoside binding site.

Belongs to the acetyltransferase family. MshD subfamily. In terms of assembly, monomer.

The enzyme catalyses 1D-myo-inositol 2-(L-cysteinylamino)-2-deoxy-alpha-D-glucopyranoside + acetyl-CoA = mycothiol + CoA + H(+). Its function is as follows. Catalyzes the transfer of acetyl from acetyl-CoA to desacetylmycothiol (Cys-GlcN-Ins) to form mycothiol. In Rothia mucilaginosa (strain DY-18) (Stomatococcus mucilaginosus), this protein is Mycothiol acetyltransferase.